A 700-amino-acid chain; its full sequence is Elongation factor G (700 aa).

One can recognise a tr-type G domain in the interval 10-286; the sequence is TKVRNIGIMA…AVIDYLPNPL (277 aa). Residues 19–26, 83–87, and 137–140 each bind GTP; these read AHIDAGKT, DTPGH, and NKMD.

The protein belongs to the TRAFAC class translation factor GTPase superfamily. Classic translation factor GTPase family. EF-G/EF-2 subfamily.

It localises to the cytoplasm. Functionally, catalyzes the GTP-dependent ribosomal translocation step during translation elongation. During this step, the ribosome changes from the pre-translocational (PRE) to the post-translocational (POST) state as the newly formed A-site-bound peptidyl-tRNA and P-site-bound deacylated tRNA move to the P and E sites, respectively. Catalyzes the coordinated movement of the two tRNA molecules, the mRNA and conformational changes in the ribosome. The sequence is that of Elongation factor G from Mycolicibacterium vanbaalenii (strain DSM 7251 / JCM 13017 / BCRC 16820 / KCTC 9966 / NRRL B-24157 / PYR-1) (Mycobacterium vanbaalenii).